Reading from the N-terminus, the 415-residue chain is 8-amino-7-oxononanoate synthase (415 aa).

Residue Arg-21 coordinates substrate. 117-118 (GY) is a binding site for pyridoxal 5'-phosphate. Substrate is bound at residue His-149. Pyridoxal 5'-phosphate-binding residues include Ser-195, His-223, and Thr-251. Lys-254 carries the N6-(pyridoxal phosphate)lysine modification. Substrate is bound at residue Thr-374.

It belongs to the class-II pyridoxal-phosphate-dependent aminotransferase family. BioF subfamily. As to quaternary structure, homodimer. Pyridoxal 5'-phosphate serves as cofactor.

The enzyme catalyses 6-carboxyhexanoyl-[ACP] + L-alanine + H(+) = (8S)-8-amino-7-oxononanoate + holo-[ACP] + CO2. It functions in the pathway cofactor biosynthesis; biotin biosynthesis. Functionally, catalyzes the decarboxylative condensation of pimeloyl-[acyl-carrier protein] and L-alanine to produce 8-amino-7-oxononanoate (AON), [acyl-carrier protein], and carbon dioxide. The sequence is that of 8-amino-7-oxononanoate synthase from Ralstonia pickettii (strain 12J).